The sequence spans 517 residues: GMP synthase [glutamine-hydrolyzing] (517 aa).

The Glutamine amidotransferase type-1 domain maps to arginine 9–leucine 199. Cysteine 86 (nucleophile) is an active-site residue. Catalysis depends on residues histidine 173 and glutamate 175. The 193-residue stretch at tryptophan 200 to arginine 392 folds into the GMPS ATP-PPase domain. Position 227–233 (serine 227–serine 233) interacts with ATP.

As to quaternary structure, homodimer.

The catalysed reaction is XMP + L-glutamine + ATP + H2O = GMP + L-glutamate + AMP + diphosphate + 2 H(+). It functions in the pathway purine metabolism; GMP biosynthesis; GMP from XMP (L-Gln route): step 1/1. In terms of biological role, catalyzes the synthesis of GMP from XMP. This chain is GMP synthase [glutamine-hydrolyzing], found in Vibrio vulnificus (strain YJ016).